Consider the following 378-residue polypeptide: Formate dehydrogenase 2, mitochondrial (378 aa).

The transit peptide at 1–18 directs the protein to the mitochondrion; that stretch reads MAMWRAPSAAGQLLGRAL. The substrate site is built by Val-122 and Asn-146. NAD(+)-binding positions include Thr-147, 201–202, Asp-221, 256–260, Asn-282, Asp-308, and 332–335; these read RI, PLTEK, and HCSG.

Belongs to the D-isomer specific 2-hydroxyacid dehydrogenase family. FDH subfamily. As to quaternary structure, homodimer.

It is found in the mitochondrion. It catalyses the reaction formate + NAD(+) = CO2 + NADH. Its function is as follows. Catalyzes the NAD(+)-dependent oxidation of formate to carbon dioxide. Involved in the cell stress response. This is Formate dehydrogenase 2, mitochondrial from Oryza sativa subsp. japonica (Rice).